We begin with the raw amino-acid sequence, 229 residues long: MQNAFTIDQLPLSWQEQLENEWSQPYMYKLREFLQSEYSQKTIYPAKDNIFTALKSTPFDSVRVVILGQDPYPGEGQAHGLSFSVPQGVRLPPSLVNIFSELHADVGVKNTTGCLQSWADQGILLLNTVLTVRAGSPFSHAGQGWEQFTDAIITKLIENRSHVIFVLWGNAARKTCDLLFRSTHKHAILAAAHPSPLAAHRGFFGCSHFSKINYLLKKLNKPMINWKLP.

Aspartate 70 acts as the Proton acceptor in catalysis.

The protein belongs to the uracil-DNA glycosylase (UDG) superfamily. UNG family.

The protein localises to the cytoplasm. It catalyses the reaction Hydrolyzes single-stranded DNA or mismatched double-stranded DNA and polynucleotides, releasing free uracil.. Functionally, excises uracil residues from the DNA which can arise as a result of misincorporation of dUMP residues by DNA polymerase or due to deamination of cytosine. This Chlamydia abortus (strain DSM 27085 / S26/3) (Chlamydophila abortus) protein is Uracil-DNA glycosylase.